Consider the following 682-residue polypeptide: Acetyl-coenzyme A synthetase 2-like, mitochondrial (682 aa).

A mitochondrion-targeting transit peptide spans 1-38 (MAARSLGSGVGRLLRGLQGRSGQSGWSLSVSRSTATRL). CoA-binding positions include 217–220 (RGGR) and T334. K389 carries the N6-acetyllysine modification. ATP-binding positions include 410 to 412 (GEP), 434 to 439 (DTWWQT), D526, and R541. S549 contributes to the CoA binding site. Position 552 (R552) interacts with ATP. K635 is modified (N6-acetyllysine).

It belongs to the ATP-dependent AMP-binding enzyme family. In terms of assembly, interacts with SIRT3. Post-translationally, reversibly acetylated at Lys-635. The acetyl-CoA synthase activity is inhibited by acetylation and activated by deacetylation mediated by the deacetylase SIRT3. As to expression, highly expressed in heart, testis, kidney, skeletal muscle, lung and spleen. Detected at low levels in brain.

Its subcellular location is the mitochondrion matrix. It catalyses the reaction acetate + ATP + CoA = acetyl-CoA + AMP + diphosphate. It carries out the reaction propanoate + ATP + CoA = propanoyl-CoA + AMP + diphosphate. Inhibited by acetylation at Lys-635 and activated by deacetylation mediated by the deacetylase SIRT3. In terms of biological role, catalyzes the synthesis of acetyl-CoA from short-chain fatty acids. Acetate is the preferred substrate. Can also utilize propionate with a much lower affinity. Provides acetyl-CoA that is utilized mainly for oxidation under ketogenic conditions. Involved in thermogenesis under ketogenic conditions, using acetate as a vital fuel when carbohydrate availability is insufficient. The polypeptide is Acetyl-coenzyme A synthetase 2-like, mitochondrial (Acss1) (Mus musculus (Mouse)).